The sequence spans 392 residues: GTPase Obg (392 aa).

The 159-residue stretch at 1–159 folds into the Obg domain; sequence MKFVDEATIL…RDLQLELMLL (159 aa). The disordered stretch occupies residues 127 to 148; the sequence is NTRFKSSVNRTPRQKTMGTPGD. Positions 129–143 are enriched in polar residues; it reads RFKSSVNRTPRQKTM. One can recognise an OBG-type G domain in the interval 160 to 333; that stretch reads ADVGMLGMPN…LCWDVMTFII (174 aa). GTP is bound by residues 166-173, 191-195, 213-216, 283-286, and 314-316; these read GMPNAGKS, FTTLV, DIPG, NKID, and SAA. The Mg(2+) site is built by Ser173 and Thr193. Over residues 362-386 the composition is skewed to acidic residues; that stretch reads EEAEAEAEDDEDWDDDWDEDDEEGV. The disordered stretch occupies residues 362–392; the sequence is EEAEAEAEDDEDWDDDWDEDDEEGVEFIYKR.

It belongs to the TRAFAC class OBG-HflX-like GTPase superfamily. OBG GTPase family. Monomer. It depends on Mg(2+) as a cofactor.

The protein localises to the cytoplasm. In terms of biological role, an essential GTPase which binds GTP, GDP and possibly (p)ppGpp with moderate affinity, with high nucleotide exchange rates and a fairly low GTP hydrolysis rate. Plays a role in control of the cell cycle, stress response, ribosome biogenesis and in those bacteria that undergo differentiation, in morphogenesis control. The protein is GTPase Obg of Klebsiella pneumoniae subsp. pneumoniae (strain ATCC 700721 / MGH 78578).